Reading from the N-terminus, the 202-residue chain is uncharacterized protein (202 aa).

This is an uncharacterized protein from Methanocaldococcus jannaschii (strain ATCC 43067 / DSM 2661 / JAL-1 / JCM 10045 / NBRC 100440) (Methanococcus jannaschii).